Consider the following 931-residue polypeptide: Valine--tRNA ligase (931 aa).

Residues 42–52 carry the 'HIGH' region motif; it reads PNVTGSLHMGH. The short motif at 523–527 is the 'KMSKS' region element; that stretch reads KMSKS. An ATP-binding site is contributed by Lys526. Positions 859-931 form a coiled coil; the sequence is MAGLIDKEAE…EEQLEKIKYL (73 aa).

This sequence belongs to the class-I aminoacyl-tRNA synthetase family. ValS type 1 subfamily. Monomer.

The protein localises to the cytoplasm. It catalyses the reaction tRNA(Val) + L-valine + ATP = L-valyl-tRNA(Val) + AMP + diphosphate. Catalyzes the attachment of valine to tRNA(Val). As ValRS can inadvertently accommodate and process structurally similar amino acids such as threonine, to avoid such errors, it has a 'posttransfer' editing activity that hydrolyzes mischarged Thr-tRNA(Val) in a tRNA-dependent manner. In Alcanivorax borkumensis (strain ATCC 700651 / DSM 11573 / NCIMB 13689 / SK2), this protein is Valine--tRNA ligase.